The following is a 425-amino-acid chain: G protein-activated inward rectifier potassium channel 2 (425 aa).

Residues 1-91 (MTMAKLTESM…IFTTLVDLKW (91 aa)) lie on the Cytoplasmic side of the membrane. Phosphoserine is present on residues serine 18 and serine 25. Residues 92–116 (RFNLLIFVMVYTVTWLFFGMIWWLI) form a helical membrane-spanning segment. Residues 117 to 140 (AYIRGDMDHIEDPSWTPCVTNLNG) lie on the Extracellular side of the membrane. Positions 141-152 (FVSAFLFSIETE) form an intramembrane region, helical; Pore-forming. The segment at residues 153 to 159 (TTIGYGY) is an intramembrane region (pore-forming). The Selectivity filter signature appears at 154–159 (TIGYGY). The Extracellular portion of the chain corresponds to 160 to 168 (RVITDKCPE). The helical transmembrane segment at 169–190 (GIILLLIQSVLGSIVNAFMVGC) threads the bilayer. Topologically, residues 191-425 (MFVKISQPKK…VANLENESKV (235 aa)) are cytoplasmic. The interval 392 to 425 (NQHAELETEEEEKNPEELTERNGDVANLENESKV) is disordered. The short motif at 422–425 (ESKV) is the PDZ-binding element.

It belongs to the inward rectifier-type potassium channel (TC 1.A.2.1) family. KCNJ6 subfamily. As to quaternary structure, associates with KCNJ3/GIRK1to form a G-protein-activated heteromultimer pore-forming unit. Associates with KCNJ5/GRIK4 to form a G-protein-activated heteromultimer pore-forming unit. The resulting inward current is much larger. Interacts (via PDZ-binding motif) with SNX27 (via PDZ domain); the interaction is required when endocytosed to prevent degradation in lysosomes and promote recycling to the plasma membrane. In terms of assembly, associates with KCNJ3/GRIK1 to form a G-protein-activated heteromultimer pore-forming unit. Associates with KCNJ3/GRIK1 to form a G-protein-activated heteromultimer pore-forming unit. The resulting inward current is much larger. In terms of tissue distribution, expressed in the brain.

The protein localises to the membrane. It catalyses the reaction K(+)(in) = K(+)(out). Activated by phosphatidylinositol 4,5 biphosphate (PtdIns(4,5)P2). Its function is as follows. Inward rectifier potassium channels are characterized by a greater tendency to allow potassium to flow into the cell rather than out of it. Their voltage dependence is regulated by the concentration of extracellular potassium; as external potassium is raised, the voltage range of the channel opening shifts to more positive voltages. The inward rectification is mainly due to the blockage of outward current by internal magnesium. This potassium channel is controlled by G proteins. Forms a functional channel in association with KCNJ3/GIRK1. Functionally, inward rectifier potassium channels are characterized by a greater tendency to allow potassium to flow into the cell rather than out of it. Their voltage dependence is regulated by the concentration of extracellular potassium; as external potassium is raised, the voltage range of the channel opening shifts to more positive voltages. The inward rectification is mainly due to the blockage of outward current by internal magnesium. This potassium channel is controlled by G proteins. The sequence is that of G protein-activated inward rectifier potassium channel 2 (Kcnj6) from Mus musculus (Mouse).